Consider the following 837-residue polypeptide: Translation initiation factor IF-2 (837 aa).

Residues 94 to 252 form a disordered region; that stretch reads QRSPEEIEAE…NAHGFQSPTG (159 aa). The span at 96–136 shows a compositional bias: basic and acidic residues; the sequence is SPEEIEAERKRELDERRAVENAARQKAEEEARVRAEEEARR. Residues 137-171 show a composition bias toward low complexity; the sequence is QPAAPSAPAEAVAAPAPVAEPVREAAPVVAAAPAA. 2 stretches are compositionally biased toward basic and acidic residues: residues 172–213 and 221–230; these read DTRK…EKAP and TTDEESDGFR. Basic residues predominate over residues 231-244; sequence RGGRGKAKLKKRNA. In terms of domain architecture, tr-type G spans 337-506; it reads PRAPVVTVMG…LLQAEVLELT (170 aa). Positions 346 to 353 are G1; it reads GHVDHGKT. Residue 346 to 353 coordinates GTP; it reads GHVDHGKT. The interval 371-375 is G2; it reads GITQH. The interval 392-395 is G3; the sequence is DTPG. GTP-binding positions include 392–396 and 446–449; these read DTPGH and NKID. The interval 446 to 449 is G4; that stretch reads NKID. A G5 region spans residues 482 to 484; that stretch reads SAK.

The protein belongs to the TRAFAC class translation factor GTPase superfamily. Classic translation factor GTPase family. IF-2 subfamily.

It is found in the cytoplasm. Its function is as follows. One of the essential components for the initiation of protein synthesis. Protects formylmethionyl-tRNA from spontaneous hydrolysis and promotes its binding to the 30S ribosomal subunits. Also involved in the hydrolysis of GTP during the formation of the 70S ribosomal complex. The chain is Translation initiation factor IF-2 from Pseudomonas fluorescens (strain Pf0-1).